The sequence spans 453 residues: UDP-N-acetylmuramoylalanine--D-glutamate ligase (453 aa).

An ATP-binding site is contributed by 119-125 (GTNGKTT).

It belongs to the MurCDEF family.

It is found in the cytoplasm. It catalyses the reaction UDP-N-acetyl-alpha-D-muramoyl-L-alanine + D-glutamate + ATP = UDP-N-acetyl-alpha-D-muramoyl-L-alanyl-D-glutamate + ADP + phosphate + H(+). It functions in the pathway cell wall biogenesis; peptidoglycan biosynthesis. Cell wall formation. Catalyzes the addition of glutamate to the nucleotide precursor UDP-N-acetylmuramoyl-L-alanine (UMA). This Syntrophus aciditrophicus (strain SB) protein is UDP-N-acetylmuramoylalanine--D-glutamate ligase.